The primary structure comprises 220 residues: Guanylate kinase (220 aa).

Residues 15–194 form the Guanylate kinase-like domain; the sequence is GLMLVISSPS…ALDAVQSIVK (180 aa). Position 22–29 (22–29) interacts with ATP; the sequence is SPSGAGKS.

It belongs to the guanylate kinase family.

Its subcellular location is the cytoplasm. It carries out the reaction GMP + ATP = GDP + ADP. Its function is as follows. Essential for recycling GMP and indirectly, cGMP. This Rhizobium johnstonii (strain DSM 114642 / LMG 32736 / 3841) (Rhizobium leguminosarum bv. viciae) protein is Guanylate kinase.